The sequence spans 227 residues: Cytochrome c oxidase subunit 2 (227 aa).

At 1–14 (MAYPFQLGLQDATS) the chain is on the mitochondrial intermembrane side. The helical transmembrane segment at 15 to 45 (PIMEELTNFHDHTLMIVFLISSLVLYIISLM) threads the bilayer. At 46-59 (LTTKLTHTSTMDAQ) the chain is on the mitochondrial matrix side. A helical membrane pass occupies residues 60–87 (EVETIWTILPAVILILIALPSLRILYMM). At 88–227 (DEINNPVLTV…HFENWSASMI (140 aa)) the chain is on the mitochondrial intermembrane side. 6 residues coordinate Cu cation: His-161, Cys-196, Glu-198, Cys-200, His-204, and Met-207. Glu-198 lines the Mg(2+) pocket.

This sequence belongs to the cytochrome c oxidase subunit 2 family. In terms of assembly, component of the cytochrome c oxidase (complex IV, CIV), a multisubunit enzyme composed of 14 subunits. The complex is composed of a catalytic core of 3 subunits MT-CO1, MT-CO2 and MT-CO3, encoded in the mitochondrial DNA, and 11 supernumerary subunits COX4I, COX5A, COX5B, COX6A, COX6B, COX6C, COX7A, COX7B, COX7C, COX8 and NDUFA4, which are encoded in the nuclear genome. The complex exists as a monomer or a dimer and forms supercomplexes (SCs) in the inner mitochondrial membrane with NADH-ubiquinone oxidoreductase (complex I, CI) and ubiquinol-cytochrome c oxidoreductase (cytochrome b-c1 complex, complex III, CIII), resulting in different assemblies (supercomplex SCI(1)III(2)IV(1) and megacomplex MCI(2)III(2)IV(2)). Found in a complex with TMEM177, COA6, COX18, COX20, SCO1 and SCO2. Interacts with TMEM177 in a COX20-dependent manner. Interacts with COX20. Interacts with COX16. Cu cation is required as a cofactor.

It localises to the mitochondrion inner membrane. The enzyme catalyses 4 Fe(II)-[cytochrome c] + O2 + 8 H(+)(in) = 4 Fe(III)-[cytochrome c] + 2 H2O + 4 H(+)(out). Component of the cytochrome c oxidase, the last enzyme in the mitochondrial electron transport chain which drives oxidative phosphorylation. The respiratory chain contains 3 multisubunit complexes succinate dehydrogenase (complex II, CII), ubiquinol-cytochrome c oxidoreductase (cytochrome b-c1 complex, complex III, CIII) and cytochrome c oxidase (complex IV, CIV), that cooperate to transfer electrons derived from NADH and succinate to molecular oxygen, creating an electrochemical gradient over the inner membrane that drives transmembrane transport and the ATP synthase. Cytochrome c oxidase is the component of the respiratory chain that catalyzes the reduction of oxygen to water. Electrons originating from reduced cytochrome c in the intermembrane space (IMS) are transferred via the dinuclear copper A center (CU(A)) of subunit 2 and heme A of subunit 1 to the active site in subunit 1, a binuclear center (BNC) formed by heme A3 and copper B (CU(B)). The BNC reduces molecular oxygen to 2 water molecules using 4 electrons from cytochrome c in the IMS and 4 protons from the mitochondrial matrix. In Batomys granti (Luzon hairy-tailed rat), this protein is Cytochrome c oxidase subunit 2 (MT-CO2).